A 501-amino-acid chain; its full sequence is Acetylcholine receptor subunit beta (501 aa).

The N-terminal stretch at 1–23 (MALGALLLLLGVLGTPLAPGARG) is a signal peptide. Topologically, residues 24–244 (SEAEGQLIKK…VIFYLIIRRK (221 aa)) are extracellular. Cysteines 151 and 165 form a disulfide. Asn-164 carries an N-linked (GlcNAc...) asparagine glycan. 3 helical membrane-spanning segments follow: residues 245–269 (PLFY…VFYL), 277–295 (MGLS…LLLA), and 311–332 (YLMF…VLNL). Residues 333–469 (HHRSPHTHQM…WQFVAMVVDR (137 aa)) lie on the Cytoplasmic side of the membrane. Residues 362–382 (RPKPERDQLPEPHHSLSPRSG) are disordered. Positions 363-375 (PKPERDQLPEPHH) are enriched in basic and acidic residues. Residue Tyr-390 is modified to Phosphotyrosine; by Tyr-kinases. The chain crosses the membrane as a helical span at residues 470 to 488 (LFLWTFIVFTSVGTLVIFL).

It belongs to the ligand-gated ion channel (TC 1.A.9) family. Acetylcholine receptor (TC 1.A.9.1) subfamily. Beta-1/CHRNB1 sub-subfamily. As to quaternary structure, pentamer of two alpha chains, and one each of the beta, delta, and gamma (in immature muscle) or epsilon (in mature muscle) chains. The muscle heteropentamer composed of alpha-1, beta-1, delta, epsilon subunits interacts with the alpha-conotoxin ImII.

It is found in the postsynaptic cell membrane. It localises to the cell membrane. The catalysed reaction is K(+)(in) = K(+)(out). The enzyme catalyses Na(+)(in) = Na(+)(out). After binding acetylcholine, the AChR responds by an extensive change in conformation that affects all subunits and leads to opening of an ion-conducting channel across the plasma membrane. The protein is Acetylcholine receptor subunit beta (Chrnb1) of Mus musculus (Mouse).